A 195-amino-acid polypeptide reads, in one-letter code: Elongation factor P (195 aa).

Belongs to the elongation factor P family.

Its subcellular location is the cytoplasm. The protein operates within protein biosynthesis; polypeptide chain elongation. In terms of biological role, involved in peptide bond synthesis. Stimulates efficient translation and peptide-bond synthesis on native or reconstituted 70S ribosomes in vitro. Probably functions indirectly by altering the affinity of the ribosome for aminoacyl-tRNA, thus increasing their reactivity as acceptors for peptidyl transferase. The protein is Elongation factor P of Rhodopirellula baltica (strain DSM 10527 / NCIMB 13988 / SH1).